Here is a 356-residue protein sequence, read N- to C-terminus: UDP-3-O-acylglucosamine N-acyltransferase (356 aa).

Residue histidine 242 is the Proton acceptor of the active site.

This sequence belongs to the transferase hexapeptide repeat family. LpxD subfamily. As to quaternary structure, homotrimer.

The enzyme catalyses a UDP-3-O-[(3R)-3-hydroxyacyl]-alpha-D-glucosamine + a (3R)-hydroxyacyl-[ACP] = a UDP-2-N,3-O-bis[(3R)-3-hydroxyacyl]-alpha-D-glucosamine + holo-[ACP] + H(+). The protein operates within bacterial outer membrane biogenesis; LPS lipid A biosynthesis. Functionally, catalyzes the N-acylation of UDP-3-O-acylglucosamine using 3-hydroxyacyl-ACP as the acyl donor. Is involved in the biosynthesis of lipid A, a phosphorylated glycolipid that anchors the lipopolysaccharide to the outer membrane of the cell. The chain is UDP-3-O-acylglucosamine N-acyltransferase from Acinetobacter baumannii (strain AB307-0294).